Reading from the N-terminus, the 276-residue chain is MSGAPIGVFDSGVGGLTVARAILDQLPGESLLYIGDTAHAPYGPRPIAEVRRYALAALDELVSAGVKLLVIACNSASAACLRDARERYDVPVVEVIVPATRRAVAATRSGRVGVIGTVATITSRAYEDAFAAAAGTELVSVACPAFVDFVERGITSGRQLLGLTEAYLAPLQEADVDTVILGCTHYPLLTGVIGLVMGEGVTLVSSAEETAKDTYRVLARDGLFRDPDLPPPAHRFLTTGDPAAFARVGRRFLGPEITAVSIAPAAAPRQAQAVGR.

Substrate is bound by residues 10-11 (DS) and 42-43 (YG). C73 serves as the catalytic Proton donor/acceptor. 74–75 (NS) is a binding site for substrate. Catalysis depends on C183, which acts as the Proton donor/acceptor. 184 to 185 (TH) contacts substrate.

The protein belongs to the aspartate/glutamate racemases family.

The catalysed reaction is L-glutamate = D-glutamate. It functions in the pathway cell wall biogenesis; peptidoglycan biosynthesis. Functionally, provides the (R)-glutamate required for cell wall biosynthesis. The sequence is that of Glutamate racemase from Parafrankia sp. (strain EAN1pec).